The following is a 377-amino-acid chain: Chaperone protein DnaJ (377 aa).

Positions 5-70 (DYYEILGVER…EKRAAYDQYG (66 aa)) constitute a J domain. A CR-type zinc finger spans residues 134 to 212 (GITKDIQIQT…CHGDGRVHKT (79 aa)). Zn(2+)-binding residues include Cys-147, Cys-150, Cys-164, Cys-167, Cys-186, Cys-189, Cys-200, and Cys-203. CXXCXGXG motif repeat units lie at residues 147–154 (CDHCNGSG), 164–171 (CPTCHGHG), 186–193 (CPHCHGTG), and 200–207 (CKKCHGDG).

Belongs to the DnaJ family. In terms of assembly, homodimer. Zn(2+) serves as cofactor.

Its subcellular location is the cytoplasm. Its function is as follows. Participates actively in the response to hyperosmotic and heat shock by preventing the aggregation of stress-denatured proteins and by disaggregating proteins, also in an autonomous, DnaK-independent fashion. Unfolded proteins bind initially to DnaJ; upon interaction with the DnaJ-bound protein, DnaK hydrolyzes its bound ATP, resulting in the formation of a stable complex. GrpE releases ADP from DnaK; ATP binding to DnaK triggers the release of the substrate protein, thus completing the reaction cycle. Several rounds of ATP-dependent interactions between DnaJ, DnaK and GrpE are required for fully efficient folding. Also involved, together with DnaK and GrpE, in the DNA replication of plasmids through activation of initiation proteins. The chain is Chaperone protein DnaJ from Actinobacillus succinogenes (strain ATCC 55618 / DSM 22257 / CCUG 43843 / 130Z).